The primary structure comprises 136 residues: Crossover junction endodeoxyribonuclease Hjc (136 aa).

Glu9 contributes to the Mg(2+) binding site. Ser29 is a catalytic residue. Mg(2+)-binding residues include Asp38 and Glu51.

This sequence belongs to the Holliday junction resolvase Hjc family. Homodimer. Mg(2+) serves as cofactor.

The catalysed reaction is Endonucleolytic cleavage at a junction such as a reciprocal single-stranded crossover between two homologous DNA duplexes (Holliday junction).. A structure-specific endonuclease that resolves Holliday junction (HJ) intermediates during genetic recombination. Cleaves 4-way DNA junctions introducing paired nicks in opposing strands, leaving a 5'-terminal phosphate and a 3'-terminal hydroxyl group that are subsequently ligated to produce recombinant products. This chain is Crossover junction endodeoxyribonuclease Hjc, found in Archaeoglobus fulgidus (strain ATCC 49558 / DSM 4304 / JCM 9628 / NBRC 100126 / VC-16).